The primary structure comprises 114 residues: uncharacterized protein (114 aa).

Residues valine 90–glycine 114 are disordered.

This is an uncharacterized protein from Caenorhabditis elegans.